The chain runs to 526 residues: Flavonoid 3'-monooxygenase CYP75B3 (526 aa).

The chain crosses the membrane as a helical span at residues 6–26; it reads LPLLLGSLAVSAAVWYLVYFL. Cys461 contacts heme.

This sequence belongs to the cytochrome P450 family. Requires heme as cofactor.

The protein resides in the membrane. It carries out the reaction a 3'-unsubstituted flavone + reduced [NADPH--hemoprotein reductase] + O2 = a 3'-hydroxyflavone + oxidized [NADPH--hemoprotein reductase] + H2O + H(+). Its pathway is secondary metabolite biosynthesis; flavonoid biosynthesis. Its function is as follows. Catalyzes the 3'-hydroxylation of the flavonoid B-ring to the 3',4'-hydroxylated state. Catalyzes the 3'-hydroxylation of apigenin to generate luteolin. The chain is Flavonoid 3'-monooxygenase CYP75B3 from Oryza sativa subsp. japonica (Rice).